The chain runs to 222 residues: Pro-opiomelanocortin-1 (222 aa).

Positions 1–28 are cleaved as a signal peptide; sequence MVRGERMLCPAWLLALAVLCAAGSEVRA. A propeptide spanning residues 29–105 is cleaved from the precursor; the sequence is QCMEDARCRD…DPESSPQHEH (77 aa).

The protein belongs to the POMC family. Specific enzymatic cleavages at paired basic residues yield the different active peptides.

The protein localises to the secreted. Functionally, stimulates the adrenal glands to release cortisol. Its function is as follows. Anorexigenic peptide. Increases the pigmentation of skin by increasing melanin production in melanocytes. In terms of biological role, increases the pigmentation of skin by increasing melanin production in melanocytes. Endogenous orexigenic opiate. Functionally, endogenous opiate. The chain is Pro-opiomelanocortin-1 (pomca) from Cyprinus carpio (Common carp).